Reading from the N-terminus, the 406-residue chain is Ribulose bisphosphate carboxylase large chain (406 aa).

Substrate-binding residues include Asn101 and Thr151. Lys153 serves as the catalytic Proton acceptor. Lys155 contributes to the substrate binding site. Residues Lys179, Asp181, and Glu182 each coordinate Mg(2+). N6-carboxylysine is present on Lys179. Catalysis depends on His272, which acts as the Proton acceptor. Positions 273, 305, and 357 each coordinate substrate.

Belongs to the RuBisCO large chain family. Type I subfamily. Heterohexadecamer of 8 large chains and 8 small chains; disulfide-linked. The disulfide link is formed within the large subunit homodimers. It depends on Mg(2+) as a cofactor. In terms of processing, the disulfide bond which can form in the large chain dimeric partners within the hexadecamer appears to be associated with oxidative stress and protein turnover.

The protein resides in the plastid. It is found in the chloroplast. It carries out the reaction 2 (2R)-3-phosphoglycerate + 2 H(+) = D-ribulose 1,5-bisphosphate + CO2 + H2O. The catalysed reaction is D-ribulose 1,5-bisphosphate + O2 = 2-phosphoglycolate + (2R)-3-phosphoglycerate + 2 H(+). In terms of biological role, ruBisCO catalyzes two reactions: the carboxylation of D-ribulose 1,5-bisphosphate, the primary event in carbon dioxide fixation, as well as the oxidative fragmentation of the pentose substrate in the photorespiration process. Both reactions occur simultaneously and in competition at the same active site. The protein is Ribulose bisphosphate carboxylase large chain (rbcL) of Trichomanes striatum (Fern).